A 139-amino-acid chain; its full sequence is Large ribosomal subunit protein uL13 (139 aa).

The protein belongs to the universal ribosomal protein uL13 family. Part of the 50S ribosomal subunit.

Functionally, this protein is one of the early assembly proteins of the 50S ribosomal subunit, although it is not seen to bind rRNA by itself. It is important during the early stages of 50S assembly. This chain is Large ribosomal subunit protein uL13, found in Methanococcoides burtonii (strain DSM 6242 / NBRC 107633 / OCM 468 / ACE-M).